Consider the following 168-residue polypeptide: Sec-independent protein translocase protein TatB (168 aa).

The chain crosses the membrane as a helical span at residues 1–21; it reads MIDLGISKLALIGAVALIVIG.

Belongs to the TatB family. In terms of assembly, the Tat system comprises two distinct complexes: a TatABC complex, containing multiple copies of TatA, TatB and TatC subunits, and a separate TatA complex, containing only TatA subunits. Substrates initially bind to the TatABC complex, which probably triggers association of the separate TatA complex to form the active translocon.

It localises to the cell inner membrane. In terms of biological role, part of the twin-arginine translocation (Tat) system that transports large folded proteins containing a characteristic twin-arginine motif in their signal peptide across membranes. Together with TatC, TatB is part of a receptor directly interacting with Tat signal peptides. TatB may form an oligomeric binding site that transiently accommodates folded Tat precursor proteins before their translocation. In Cupriavidus pinatubonensis (strain JMP 134 / LMG 1197) (Cupriavidus necator (strain JMP 134)), this protein is Sec-independent protein translocase protein TatB.